Reading from the N-terminus, the 231-residue chain is Two-component response regulator ORR1 (231 aa).

The 127-residue stretch at 9–135 folds into the Response regulatory domain; that stretch reads RVLLVDDSPV…DVQRLRKCSP (127 aa). The residue at position 68 (D68) is a 4-aspartylphosphate.

The protein belongs to the ARR family. Type-A subfamily. In terms of processing, two-component system major event consists of a His-to-Asp phosphorelay between a sensor histidine kinase (HK) and a response regulator (RR). In plants, the His-to-Asp phosphorelay involves an additional intermediate named Histidine-containing phosphotransfer protein (HPt). This multistep phosphorelay consists of a His-Asp-His-Asp sequential transfer of a phosphate group between first a His and an Asp of the HK protein, followed by the transfer to a conserved His of the HPt protein and finally the transfer to an Asp in the receiver domain of the RR protein. As to expression, expressed in mature leaves and flowers, and at low levels in roots and shoots.

Functionally, functions as a response regulator involved in His-to-Asp phosphorelay signal transduction system. Phosphorylation of the Asp residue in the receiver domain activates the ability of the protein to promote the transcription of target genes. Type-A response regulators seem to act as negative regulators of the cytokinin signaling. The polypeptide is Two-component response regulator ORR1 (Oryza sativa subsp. indica (Rice)).